The following is a 550-amino-acid chain: CCR4-NOT transcription complex subunit 6-like-A (550 aa).

The tract at residues 1–148 is required for interaction with cnot1, cnot3 and cnot7; sequence MPKEKYDPPD…LYQEPDGMRK (148 aa). LRR repeat units follow at residues 52-73, 75-96, 98-120, and 121-143; these read HLTV…IAKL, NLVY…LGNV, SLRE…GRLF, and RLQT…YQEP. The nuclease domain stretch occupies residues 153-550; that stretch reads MLDNLSVHPE…INGVHLPSRR (398 aa). Position 235 (Glu235) interacts with Mg(2+). Substrate-binding residues include Glu235, Glu271, His355, and Pro360. Residue Asp405 participates in Mg(2+) binding. Residue Asp405 is the Proton donor/acceptor of the active site. Positions 407, 474, and 479 each coordinate substrate.

The protein belongs to the CCR4/nocturin family. As to quaternary structure, component of the CCR4-NOT complex. Mg(2+) is required as a cofactor.

The protein resides in the cytoplasm. The protein localises to the nucleus. The enzyme catalyses Exonucleolytic cleavage of poly(A) to 5'-AMP.. Functionally, poly(A) nuclease with 3'-5' RNase activity. Catalytic component of the CCR4-NOT complex which is one of the major cellular mRNA deadenylases and is linked to various cellular processes including bulk mRNA degradation, miRNA-mediated repression, translational repression during translational initiation and general transcription regulation. Additional complex functions may be a consequence of its influence on mRNA expression. This chain is CCR4-NOT transcription complex subunit 6-like-A (cnot6l-a), found in Xenopus laevis (African clawed frog).